We begin with the raw amino-acid sequence, 207 residues long: BTB/POZ domain-containing protein At1g01640 (207 aa).

Residues 24–94 (TDVLVKPGEE…LYSGNLKAPY (71 aa)) form the BTB domain.

As to quaternary structure, interacts with CUL3A.

It participates in protein modification; protein ubiquitination. Functionally, may act as a substrate-specific adapter of an E3 ubiquitin-protein ligase complex (CUL3-RBX1-BTB) which mediates the ubiquitination and subsequent proteasomal degradation of target proteins. The chain is BTB/POZ domain-containing protein At1g01640 from Arabidopsis thaliana (Mouse-ear cress).